A 1052-amino-acid chain; its full sequence is 3-hydroxy-3-methylglutaryl coenzyme A reductase mokG (1052 aa).

6 consecutive transmembrane segments (helical) span residues 223–243 (VDMA…VSLF), 253–273 (FWLA…GLGV), 279–299 (VPVD…TVGF), 349–369 (GWSI…GAVF), 378–398 (FCFL…TFYA), and 440–460 (WKLI…SSFF). Positions 224 to 403 (DMAIIGLGYL…FTFYATILCV (180 aa)) constitute an SSD domain. Residues 461–617 (YRIMGGFMTN…FKANQAESLT (157 aa)) are linker. The tract at residues 571 to 594 (APKESAAPAPPSSPASVPSAVPVP) is disordered. Over residues 584–594 (PASVPSAVPVP) the composition is skewed to low complexity. Residues 618 to 1044 (DDELAELCLR…LVNAHMRHNR (427 aa)) are catalytic. Residue Glu734 is the Charge relay system of the active site. N-linked (GlcNAc...) asparagine glycosylation occurs at Asn798. Residues Lys867 and Asp943 each act as charge relay system in the active site. His1039 acts as the Proton donor in catalysis. The N-linked (GlcNAc...) asparagine glycan is linked to Asn1043.

The protein belongs to the HMG-CoA reductase family.

The protein localises to the endoplasmic reticulum membrane. It catalyses the reaction (R)-mevalonate + 2 NADP(+) + CoA = (3S)-3-hydroxy-3-methylglutaryl-CoA + 2 NADPH + 2 H(+). Its pathway is polyketide biosynthesis; lovastatin biosynthesis. Functionally, HMG-CoA reductase; part of the gene cluster that mediates the biosynthesis of monakolin K, also known as lovastatin, and which acts as a potent competitive inhibitor of HMG-CoA reductase. Monakolin K biosynthesis is performed in two stages. The first stage is catalyzed by the nonaketide synthase mokA, which belongs to type I polyketide synthases and catalyzes the iterative nine-step formation of the polyketide. This PKS stage is completed by the action of dehydrogenase mokE, which catalyzes the NADPH-dependent reduction of the unsaturated tetra-, penta- and heptaketide intermediates that arise during the mokA-mediated biosynthesis of the nonaketide chain and leads to dihydromonacolin L. Covalently bound dihydromonacolin L is released from mokA by the mokD esterase. Conversion of dihydromonacolin L into monacolin L and then monacolin J is subsequently performed with the participation of molecular oxygen and P450 monoogygenase mokC. Finally, mokF performs the conversion of monacoline J to monacoline K through the addition of the side-chain diketide moiety (2R)-2-methylbutanoate produced by the diketide synthase mokB. HMG-CoA reductase mokG may act as a down-regulator of monacolin K production. This chain is 3-hydroxy-3-methylglutaryl coenzyme A reductase mokG, found in Monascus pilosus (Red mold).